The sequence spans 218 residues: N-(5'-phosphoribosyl)anthranilate isomerase (218 aa).

It belongs to the TrpF family.

It catalyses the reaction N-(5-phospho-beta-D-ribosyl)anthranilate = 1-(2-carboxyphenylamino)-1-deoxy-D-ribulose 5-phosphate. Its pathway is amino-acid biosynthesis; L-tryptophan biosynthesis; L-tryptophan from chorismate: step 3/5. The chain is N-(5'-phosphoribosyl)anthranilate isomerase from Stenotrophomonas maltophilia (strain R551-3).